The sequence spans 250 residues: Lymphocyte function-associated antigen 3 (250 aa).

The signal sequence occupies residues 1 to 28 (MVAGSDAGRALGVLSVVCLLHCFGFISC). Topologically, residues 29 to 215 (FSQQIYGVVY…IPSSGHSRHR (187 aa)) are extracellular. Residues 30-121 (SQQIYGVVYG…DTMKFFLYVL (92 aa)) enclose the Ig-like domain. Residues Asn-40, Asn-94, Asn-109, Asn-135, Asn-169, and Asn-195 are each glycosylated (N-linked (GlcNAc...) asparagine). Cys-142 and Cys-187 are joined by a disulfide. The helical transmembrane segment at 216 to 238 (YALIPIPLAVITTCIVLYMNGIL) threads the bilayer. Over 239–250 (KCDRKPDRTNSN) the chain is Cytoplasmic.

In terms of assembly, interacts with CD2. Interacts with CMTM6. (Microbial infection) Interacts with human cytomegalovirus protein UL148; this interaction retains immature CD58 intracellularly.

Its subcellular location is the cell membrane. Functionally, ligand of the T-lymphocyte CD2 glycoprotein. This interaction is important in mediating thymocyte interactions with thymic epithelial cells, antigen-independent and -dependent interactions of T-lymphocytes with target cells and antigen-presenting cells and the T-lymphocyte rosetting with erythrocytes. In addition, the LFA-3/CD2 interaction may prime response by both the CD2+ and LFA-3+ cells. The protein is Lymphocyte function-associated antigen 3 (CD58) of Homo sapiens (Human).